Consider the following 320-residue polypeptide: Lipoyl synthase (320 aa).

Positions 67, 72, 78, 93, 97, 100, and 307 each coordinate [4Fe-4S] cluster. One can recognise a Radical SAM core domain in the interval 79–296 (FNHGTATFMI…RDKAEKMGFE (218 aa)).

The protein belongs to the radical SAM superfamily. Lipoyl synthase family. The cofactor is [4Fe-4S] cluster.

Its subcellular location is the cytoplasm. The catalysed reaction is [[Fe-S] cluster scaffold protein carrying a second [4Fe-4S](2+) cluster] + N(6)-octanoyl-L-lysyl-[protein] + 2 oxidized [2Fe-2S]-[ferredoxin] + 2 S-adenosyl-L-methionine + 4 H(+) = [[Fe-S] cluster scaffold protein] + N(6)-[(R)-dihydrolipoyl]-L-lysyl-[protein] + 4 Fe(3+) + 2 hydrogen sulfide + 2 5'-deoxyadenosine + 2 L-methionine + 2 reduced [2Fe-2S]-[ferredoxin]. It functions in the pathway protein modification; protein lipoylation via endogenous pathway; protein N(6)-(lipoyl)lysine from octanoyl-[acyl-carrier-protein]: step 2/2. In terms of biological role, catalyzes the radical-mediated insertion of two sulfur atoms into the C-6 and C-8 positions of the octanoyl moiety bound to the lipoyl domains of lipoate-dependent enzymes, thereby converting the octanoylated domains into lipoylated derivatives. This chain is Lipoyl synthase, found in Histophilus somni (strain 129Pt) (Haemophilus somnus).